Consider the following 253-residue polypeptide: 3-deoxy-manno-octulosonate cytidylyltransferase (253 aa).

Belongs to the KdsB family.

It is found in the cytoplasm. It catalyses the reaction 3-deoxy-alpha-D-manno-oct-2-ulosonate + CTP = CMP-3-deoxy-beta-D-manno-octulosonate + diphosphate. It functions in the pathway nucleotide-sugar biosynthesis; CMP-3-deoxy-D-manno-octulosonate biosynthesis; CMP-3-deoxy-D-manno-octulosonate from 3-deoxy-D-manno-octulosonate and CTP: step 1/1. Its pathway is bacterial outer membrane biogenesis; lipopolysaccharide biosynthesis. Its function is as follows. Activates KDO (a required 8-carbon sugar) for incorporation into bacterial lipopolysaccharide in Gram-negative bacteria. The protein is 3-deoxy-manno-octulosonate cytidylyltransferase of Acinetobacter baumannii (strain ATCC 17978 / DSM 105126 / CIP 53.77 / LMG 1025 / NCDC KC755 / 5377).